The primary structure comprises 60 residues: Large ribosomal subunit protein uL30 (60 aa).

It belongs to the universal ribosomal protein uL30 family. Part of the 50S ribosomal subunit.

In Shewanella loihica (strain ATCC BAA-1088 / PV-4), this protein is Large ribosomal subunit protein uL30.